We begin with the raw amino-acid sequence, 677 residues long: Methionine--tRNA ligase (677 aa).

The 'HIGH' region signature appears at 15–25 (PYANGSIHLGH). Residues cysteine 146, cysteine 149, cysteine 159, and cysteine 162 each coordinate Zn(2+). A 'KMSKS' region motif is present at residues 333-337 (KMSKS). Lysine 336 serves as a coordination point for ATP. In terms of domain architecture, tRNA-binding spans 575-677 (DFAKVDLRVA…DGAKPGQQVK (103 aa)).

Belongs to the class-I aminoacyl-tRNA synthetase family. MetG type 1 subfamily. As to quaternary structure, homodimer. Zn(2+) is required as a cofactor.

It is found in the cytoplasm. The catalysed reaction is tRNA(Met) + L-methionine + ATP = L-methionyl-tRNA(Met) + AMP + diphosphate. Is required not only for elongation of protein synthesis but also for the initiation of all mRNA translation through initiator tRNA(fMet) aminoacylation. This is Methionine--tRNA ligase from Salmonella schwarzengrund (strain CVM19633).